A 429-amino-acid polypeptide reads, in one-letter code: Phosphomethylpyrimidine synthase (429 aa).

Substrate is bound by residues Asn66, Met95, Tyr124, His163, Ser185 to Gly187, Asp226 to Arg229, and Glu265. Residue His269 participates in Zn(2+) binding. A substrate-binding site is contributed by Tyr292. Residue His333 coordinates Zn(2+). [4Fe-4S] cluster is bound by residues Cys409, Cys412, and Cys416.

The protein belongs to the ThiC family. [4Fe-4S] cluster serves as cofactor.

It carries out the reaction 5-amino-1-(5-phospho-beta-D-ribosyl)imidazole + S-adenosyl-L-methionine = 4-amino-2-methyl-5-(phosphooxymethyl)pyrimidine + CO + 5'-deoxyadenosine + formate + L-methionine + 3 H(+). It functions in the pathway cofactor biosynthesis; thiamine diphosphate biosynthesis. Catalyzes the synthesis of the hydroxymethylpyrimidine phosphate (HMP-P) moiety of thiamine from aminoimidazole ribotide (AIR) in a radical S-adenosyl-L-methionine (SAM)-dependent reaction. The polypeptide is Phosphomethylpyrimidine synthase (Carboxydothermus hydrogenoformans (strain ATCC BAA-161 / DSM 6008 / Z-2901)).